The chain runs to 230 residues: 3,4-dihydroxy-2-butanone 4-phosphate synthase (230 aa).

D-ribulose 5-phosphate is bound by residues arginine 38 to glutamate 39, aspartate 43, arginine 151 to threonine 155, and glutamate 175. Glutamate 39 contributes to the Mg(2+) binding site. Histidine 154 is a Mg(2+) binding site.

Belongs to the DHBP synthase family. In terms of assembly, homodimer. Requires Mg(2+) as cofactor. Mn(2+) serves as cofactor.

The enzyme catalyses D-ribulose 5-phosphate = (2S)-2-hydroxy-3-oxobutyl phosphate + formate + H(+). It functions in the pathway cofactor biosynthesis; riboflavin biosynthesis; 2-hydroxy-3-oxobutyl phosphate from D-ribulose 5-phosphate: step 1/1. Catalyzes the conversion of D-ribulose 5-phosphate to formate and 3,4-dihydroxy-2-butanone 4-phosphate. This Vibrio harveyi (Beneckea harveyi) protein is 3,4-dihydroxy-2-butanone 4-phosphate synthase.